The chain runs to 227 residues: A-type potassium channel modulatory protein KCNIP1 (227 aa).

In terms of domain architecture, EF-hand 1; degenerate spans leucine 38–proline 94. 3 consecutive EF-hand domains span residues aspartate 97 to glycine 132, threonine 133 to methionine 168, and threonine 181 to isoleucine 216. Ca(2+)-binding residues include aspartate 146, asparagine 148, aspartate 150, tyrosine 152, glutamate 157, aspartate 194, asparagine 196, aspartate 198, and glutamate 205. The interval aspartate 214 to methionine 227 is interaction with KCND2.

This sequence belongs to the recoverin family. As to quaternary structure, component of heteromultimeric potassium channels. Identified in potassium channel complexes containing KCND1, KCND2, KCND3, KCNIP1, KCNIP2, KCNIP3, KCNIP4, DPP6 and DPP10. Part of a heterooctamer composed of the tetrameric channel and four KCNIP1 chains. Probably part of a complex consisting of KCNIP1, KCNIP2 isoform 3 and KCND2. Self-associates to form homodimers and homotetramers. Interacts with KCNIP2 isoform 3 in a calcium-dependent manner. Interacts with KCND2; this interaction mediates the capture of both the N- and C-terminus of KCND2, thus preventing KCND2 N-type inactivation and modulates the channel gating kinetics. Interacts with KCND3; each KCNIP1 monomer interacts with two adjacent KCND3 subunits, through both the N-terminal inactivation ball of a KCND3 subunit and a C-terminal helix from the adjacent KCND3 subunit, clamping them together; this interaction stabilizes the tetrameric form and modulates the channel gating kinetics namely channel activation and inactivation kinetics and rate of recovery from inactivation. Detected in hippocampus and in the molecular layer of the dentate gyrus (at protein level). Isoform 1 and isoform 2 are predominantly expressed at equal levels in brain. Colocalizes with KCND3 in inhibitory interneurons in cortex and hippocampus and in striatal interneurons.

It localises to the cell membrane. It is found in the cytoplasm. The protein localises to the cell projection. Its subcellular location is the dendrite. Its function is as follows. Regulatory subunit of Kv4/D (Shal)-type voltage-gated rapidly inactivating A-type potassium channels. Regulates channel density, inactivation kinetics and rate of recovery from inactivation in a calcium-dependent and isoform-specific manner. Modulates KCND2/Kv4.2 currents. In vitro, modulates KCND1/Kv4.1 currents. Increases the presence of KCND2 at the cell surface. The polypeptide is A-type potassium channel modulatory protein KCNIP1 (Rattus norvegicus (Rat)).